A 306-amino-acid chain; its full sequence is Oxygen-dependent coproporphyrinogen-III oxidase (306 aa).

S94 contributes to the substrate binding site. 2 residues coordinate a divalent metal cation: H98 and H108. Catalysis depends on H108, which acts as the Proton donor. Substrate is bound at residue 110–112 (NVR). The a divalent metal cation site is built by H147 and H177. Residues 242–277 (YVEFNLVYDRGTLFGLQTGGRTESILMSMPPLVRWE) form an important for dimerization region. Residue 260–262 (GGR) coordinates substrate.

It belongs to the aerobic coproporphyrinogen-III oxidase family. As to quaternary structure, homodimer. It depends on a divalent metal cation as a cofactor.

Its subcellular location is the cytoplasm. It catalyses the reaction coproporphyrinogen III + O2 + 2 H(+) = protoporphyrinogen IX + 2 CO2 + 2 H2O. It functions in the pathway porphyrin-containing compound metabolism; protoporphyrin-IX biosynthesis; protoporphyrinogen-IX from coproporphyrinogen-III (O2 route): step 1/1. Involved in the heme biosynthesis. Catalyzes the aerobic oxidative decarboxylation of propionate groups of rings A and B of coproporphyrinogen-III to yield the vinyl groups in protoporphyrinogen-IX. The protein is Oxygen-dependent coproporphyrinogen-III oxidase of Shewanella woodyi (strain ATCC 51908 / MS32).